We begin with the raw amino-acid sequence, 952 residues long: Bromodomain testis-specific protein (952 aa).

Residues arginine 26 to methionine 132 form the Bromo 1 domain. The segment covering glycine 141–glutamine 150 has biased composition (basic and acidic residues). The interval glycine 141–glutamate 168 is disordered. Polar residues predominate over residues glutamine 151–alanine 167. Serine 186 is modified (phosphoserine). Positions lysine 208–proline 219 match the Nuclear localization signal motif. The tract at residues glycine 209–glutamine 257 is disordered. Low complexity predominate over residues threonine 216–glutamate 229. The Bromo 2 domain occupies valine 266–isoleucine 375. Disordered regions lie at residues serine 392–glutamine 420, valine 442–proline 504, glutamine 607–valine 746, and lysine 850–alanine 930. Positions glutamate 417–valine 442 form a coiled coil. Basic residues predominate over residues arginine 445–valine 463. In terms of domain architecture, NET spans lysine 495 to proline 577. The span at cysteine 610–alanine 619 shows a compositional bias: basic residues. Residues proline 625–glutamate 638 are compositionally biased toward pro residues. Low complexity predominate over residues serine 646–serine 681. Residues serine 718–glycine 729 show a composition bias toward polar residues. A coiled-coil region spans residues glutamate 837–aspartate 936. The segment covering lysine 850–arginine 867 has biased composition (basic and acidic residues). Over residues threonine 874–glutamine 883 the composition is skewed to polar residues. Positions glutamate 893–glutamate 902 are enriched in low complexity. The span at leucine 911–alanine 930 shows a compositional bias: basic and acidic residues.

It belongs to the BET family. Interacts with the acetylated N-terminus of histone H1, H2, H3 and H4. Interacts with P-TEFb components CDK9 and CCNT1/cyclin-T1. Interacts with mRNA splicing machinery proteins SRSF2, DDX5, HNRNPK and TARDBP. Interacts with SMARCE1. In terms of processing, ubiquitinated in a SPOP-dependent manner, leading to proteasomal degradation.

It is found in the nucleus. Its function is as follows. Testis-specific chromatin protein that specifically binds histone H4 acetylated at 'Lys-5' and 'Lys-8' (H4K5ac and H4K8ac, respectively) and plays a key role in spermatogenesis. Required in late pachytene spermatocytes: plays a role in meiotic and post-meiotic cells by binding to acetylated histones at the promoter of specific meiotic and post-meiotic genes, facilitating their activation at the appropriate time. In the post-meiotic phase of spermatogenesis, binds to hyperacetylated histones and participates in their general removal from DNA. Also recognizes and binds a subset of butyrylated histones: able to bind histone H4 butyrylated at 'Lys-8' (H4K8ac), while it is not able to bind H4 butyrylated at 'Lys-5' (H4K5ac). Also acts as a component of the splicing machinery in pachytene spermatocytes and round spermatids and participates in 3'-UTR truncation of specific mRNAs in post-meiotic spermatids. Required for chromocenter organization, a structure comprised of peri-centromeric heterochromatin. This Rattus norvegicus (Rat) protein is Bromodomain testis-specific protein (Brdt).